The primary structure comprises 333 residues: T-cell surface glycoprotein CD1c (333 aa).

An N-terminal signal peptide occupies residues 1–17; it reads MLFLQFLLLALLLPGGD. Topologically, residues 18-302 are extracellular; sequence NADASQEHVS…ILYWGHHFSM (285 aa). N38, N70, N75, and N146 each carry an N-linked (GlcNAc...) asparagine glycan. Intrachain disulfides connect C120/C185 and C225/C280. The Ig-like domain maps to 206–296; the sequence is PEAWLSSRPS…LGGQDIILYW (91 aa). Residues 303 to 323 traverse the membrane as a helical segment; the sequence is NWIALVVIVPLVILIVLVLWF. Residues 324–333 are Cytoplasmic-facing; sequence KKHCSYQDIL. The Internalization signal motif lies at 329-332; the sequence is YQDI.

As to quaternary structure, heterodimer with B2M (beta-2-microglobulin). As to expression, expressed on cortical thymocytes, on certain T-cell leukemias, and in various other tissues.

The protein resides in the cell membrane. The protein localises to the endosome membrane. It localises to the lysosome. Its function is as follows. Antigen-presenting protein that binds self and non-self lipid and glycolipid antigens and presents them to T-cell receptors on natural killer T-cells. This Homo sapiens (Human) protein is T-cell surface glycoprotein CD1c (CD1C).